A 397-amino-acid chain; its full sequence is Growth-regulating factor 5 (397 aa).

Positions 16 to 51 constitute a QLQ domain; that stretch reads PFTPTQWEELEHQALIYKYMVSGVPVPPELIFSIRR. 2 short sequence motifs (bipartite nuclear localization signal) span residues 78–96 and 114–121; these read RKPD…KKWR and RGRNRARK. Residues 81 to 125 form the WRC domain; it reads DPEPGRCRRTDGKKWRCSREAYPDSKYCEKHMHRGRNRARKSLDQ. Disordered regions lie at residues 108–172, 197–217, 288–320, and 340–397; these read CEKH…SMDA, LDYP…HHAS, PYHH…DHDH, and VLAN…DTGS. A compositionally biased stretch (basic residues) spans 111 to 120; that stretch reads HMHRGRNRAR. Residues 128 to 172 show a composition bias toward low complexity; that stretch reads TTTTPLTSPSLSFTNNNNPSPTLSSSSSSNSSSTTYSASSSSMDA. Residues 288–298 show a composition bias toward basic and acidic residues; it reads PYHHCSTDHNK.

This sequence belongs to the GRF family. In terms of assembly, interacts with GIF1. As to expression, strongly expressed in actively growing and developing tissues, such as roots, upper stems, and shoot tips containing the shoot apical meristem (SAM) and flower buds. Also expressed in mature flowers, but weakly expressed in mature stems and leaves.

The protein resides in the nucleus. Functionally, transcription activator that plays a role in the regulation of cell expansion in leaf and cotyledons tissues. Acts together with GIF1 for the development of appropriate leaf size and shape through the promotion and/or maintenance of cell proliferation activity in leaf primordia. The polypeptide is Growth-regulating factor 5 (GRF5) (Arabidopsis thaliana (Mouse-ear cress)).